Reading from the N-terminus, the 897-residue chain is MTIQSFAIEVQMSVDYLIQQFLDIGITKTKFDFITQSEKEILFRHMNVNKIAVFNKLFLQRKTHSTLNVSSTNGKSKKVKVEVRKKRVYMVPCSIRKSHVSNNTNILLVENDNSKDKYKSDDCNELSELVACDENKISSNENQVMCFISQKEKLDHFTIRQDYVRTNELVKDVNQDLDHQIRDRKGLSNSVCCDVLLNVQDEQHDDNNFSCGLSDDMAVSNNIPEHDKQKLENVRKNLTDRLRSTRTRNLSKLVKQNKHNNSKVCMIYESDKDEKLYVLPSSRVYKNKRKQSILVQSFNKPMQKTVRDVVIGETISVAELSNKMSIKSSSMIKMMMKLGLMVTINQNLDQETAQLVVEEMGHNAILRRENALEELIMHDNNNDYQNISSKLDNAKNDMGYKNRAPIVTIMGHVDHGKTSLLDYIRSTNVASSESGGITQNIGAYCVQLANNDMVTFIDTPGHEAFTDMRARGIQLTDIVVLVVAADDGVMPQTVEAIQYIRDGNLPVIIAINKIDKSVTNVERIKNELNSYGFIPEEWGGHTQFVNVSAVSGEGVNDLLDSILVQSEILELKSMHHGLAKAVVIESSLDRSRGPVVTVLVRSGELKCGDIVLCGTEYGRVRAMRDSLGFDVIKAGPSIPVELLGLSGIPGTGEWLVVVNNEKKAREVALYRKEKKREIKLARKSEKTIIENFNSMDIIKIKELNFIIKSDTQGSMEVICESLKKLSTNKMVMKILSASIGNVTETDAVLALSSHSRILAFNVKVDLSAKNIIELNHINIQYYSVIYSLLDEVKELISSTIAPQVDFKVIGIAKVHNIFQSPRYGTIAGCMVTQGVIKLHKQIKIVRNGIIMYKGVLDSLRHFKNDVSEVKIGVECGIGIKNYSDVCSGDIIEVLDKI.

Residues 402 to 570 form the tr-type G domain; it reads NRAPIVTIMG…SILVQSEILE (169 aa). The interval 411–418 is G1; sequence GHVDHGKT. GTP is bound at residue 411 to 418; that stretch reads GHVDHGKT. Positions 436–440 are G2; sequence GITQN. Residues 458–461 form a G3 region; it reads DTPG. GTP is bound by residues 458–462 and 512–515; these read DTPGH and NKID. The interval 512–515 is G4; that stretch reads NKID. The interval 548–550 is G5; sequence SAV.

The protein belongs to the TRAFAC class translation factor GTPase superfamily. Classic translation factor GTPase family. IF-2 subfamily.

It is found in the cytoplasm. In terms of biological role, one of the essential components for the initiation of protein synthesis. Protects formylmethionyl-tRNA from spontaneous hydrolysis and promotes its binding to the 30S ribosomal subunits. Also involved in the hydrolysis of GTP during the formation of the 70S ribosomal complex. This chain is Translation initiation factor IF-2, found in Blochmanniella floridana.